Consider the following 208-residue polypeptide: Methyl-CpG-binding domain protein 3-like 3 (208 aa).

Belongs to the MBD3L family.

The polypeptide is Methyl-CpG-binding domain protein 3-like 3 (MBD3L3) (Homo sapiens (Human)).